Here is a 301-residue protein sequence, read N- to C-terminus: Phosphoribosylaminoimidazole-succinocarboxamide synthase (301 aa).

Belongs to the SAICAR synthetase family.

The enzyme catalyses 5-amino-1-(5-phospho-D-ribosyl)imidazole-4-carboxylate + L-aspartate + ATP = (2S)-2-[5-amino-1-(5-phospho-beta-D-ribosyl)imidazole-4-carboxamido]succinate + ADP + phosphate + 2 H(+). Its pathway is purine metabolism; IMP biosynthesis via de novo pathway; 5-amino-1-(5-phospho-D-ribosyl)imidazole-4-carboxamide from 5-amino-1-(5-phospho-D-ribosyl)imidazole-4-carboxylate: step 1/2. The polypeptide is Phosphoribosylaminoimidazole-succinocarboxamide synthase (ADE1) (Cyberlindnera jadinii (Torula yeast)).